Reading from the N-terminus, the 220-residue chain is Probable septum site-determining protein MinC (220 aa).

This sequence belongs to the MinC family. Interacts with MinD and FtsZ.

Its function is as follows. Cell division inhibitor that blocks the formation of polar Z ring septums. Rapidly oscillates between the poles of the cell to destabilize FtsZ filaments that have formed before they mature into polar Z rings. Prevents FtsZ polymerization. The sequence is that of Probable septum site-determining protein MinC from Vibrio parahaemolyticus serotype O3:K6 (strain RIMD 2210633).